The following is a 1196-amino-acid chain: DNA-directed RNA polymerase subunit 2 (1196 aa).

The tract at residues 1074–1095 (SRARGPTQLLTRQAPEGRSRDG) is disordered. The C4-type zinc finger occupies 1133–1154 (CDSCGQFAHKVPEKKYYTCTGC).

Belongs to the RNA polymerase beta chain family.

The protein localises to the virion. The enzyme catalyses RNA(n) + a ribonucleoside 5'-triphosphate = RNA(n+1) + diphosphate. In terms of biological role, DNA-dependent RNA polymerase catalyzes the transcription of DNA into RNA using the four ribonucleoside triphosphates as substrates. This is DNA-directed RNA polymerase subunit 2 (RPO2) from Acanthamoeba polyphaga mimivirus (APMV).